The sequence spans 203 residues: Cell division protein SepF (203 aa).

2 disordered regions span residues 26–51 and 167–203; these read DGEL…RRGQ and GTAS…WRNQ. 2 stretches are compositionally biased toward basic and acidic residues: residues 39–50 and 183–203; these read EPPRRSAPERRG and RRSE…WRNQ.

This sequence belongs to the SepF family. Homodimer. Interacts with FtsZ.

Its subcellular location is the cytoplasm. In terms of biological role, cell division protein that is part of the divisome complex and is recruited early to the Z-ring. Probably stimulates Z-ring formation, perhaps through the cross-linking of FtsZ protofilaments. Its function overlaps with FtsA. The protein is Cell division protein SepF of Symbiobacterium thermophilum (strain DSM 24528 / JCM 14929 / IAM 14863 / T).